The sequence spans 585 residues: Serine protease HtrA-like (585 aa).

A disordered region spans residues 1 to 184 (MDNNKKQVIP…QPKDKDNDNT (184 aa)). Positions 21–82 (YFHNVEREER…IHQQRDDKSY (62 aa)) are enriched in basic and acidic residues. The span at 84 to 94 (QKTLNQNNQMN) shows a compositional bias: polar residues. Positions 95 to 113 (KSKDDDNKIGEESLHDVRV) are enriched in basic and acidic residues. Polar residues predominate over residues 114–124 (SSDTSTLPHQN). A compositionally biased stretch (basic and acidic residues) spans 126-139 (SIKDYDDSGNESKQ). Positions 151 to 175 (GVNSNHTEQDSRSTQPYSSKHSYSQ) are enriched in polar residues. A helical membrane pass occupies residues 224–244 (MLIIIGIIVLLLILNAIFTTV). Residues His320, Asp350, and Ser435 each act as charge relay system in the active site. The PDZ domain maps to 516–575 (GVLIGEVKENGLGDKAGLKKGDVIVELDGKKIEDNLRYRQVIYSHYDDQKTITAKIYRNG).

This sequence belongs to the peptidase S1C family.

Its subcellular location is the cell membrane. The chain is Serine protease HtrA-like from Staphylococcus epidermidis (strain ATCC 35984 / DSM 28319 / BCRC 17069 / CCUG 31568 / BM 3577 / RP62A).